An 842-amino-acid chain; its full sequence is Translation initiation factor IF-2 (842 aa).

The disordered stretch occupies residues Q94–V259. The span at S96 to A138 shows a compositional bias: basic and acidic residues. Residues A139 to P148 show a composition bias toward low complexity. A compositionally biased stretch (pro residues) spans A149 to A159. Over residues P160–D172 the composition is skewed to low complexity. Basic and acidic residues-rich tracts occupy residues A173–A202 and T226–R235. Basic residues predominate over residues R236 to Q249. Positions S342–E509 constitute a tr-type G domain. The segment at G351–T358 is G1. A GTP-binding site is contributed by G351–T358. The G2 stretch occupies residues G376 to H380. The G3 stretch occupies residues D397 to G400. Residues D397–H401 and N451–D454 contribute to the GTP site. The tract at residues N451–D454 is G4. The interval S487 to K489 is G5.

It belongs to the TRAFAC class translation factor GTPase superfamily. Classic translation factor GTPase family. IF-2 subfamily.

The protein resides in the cytoplasm. Functionally, one of the essential components for the initiation of protein synthesis. Protects formylmethionyl-tRNA from spontaneous hydrolysis and promotes its binding to the 30S ribosomal subunits. Also involved in the hydrolysis of GTP during the formation of the 70S ribosomal complex. The protein is Translation initiation factor IF-2 of Pseudomonas putida (strain GB-1).